A 325-amino-acid chain; its full sequence is Probable cell division protein WhiA (325 aa).

A DNA-binding region (H-T-H motif) is located at residues 273 to 306; it reads SLEELGALADPPLTKDAVAGRIRRLLALADKRAN.

The protein belongs to the WhiA family.

Its function is as follows. Involved in cell division and chromosome segregation. This chain is Probable cell division protein WhiA, found in Frankia alni (strain DSM 45986 / CECT 9034 / ACN14a).